The sequence spans 388 residues: Arrestin-C (388 aa).

Belongs to the arrestin family. In terms of assembly, homodimer; disulfide-linked in response to retinal illumination. Interacts with CXCR4; the interaction is dependent on the C-terminal phosphorylation of CXCR4 and modulates the calcium ion mobilization activity of CXCR4. Interacts with GPR84. Inner and outer segments, and the inner plexiform regions of the retina.

The protein localises to the photoreceptor inner segment. The protein resides in the cell projection. Its subcellular location is the cilium. It is found in the photoreceptor outer segment. May play a role in an as yet undefined retina-specific signal transduction. Could bind to photoactivated-phosphorylated red/green opsins. The sequence is that of Arrestin-C (ARR3) from Homo sapiens (Human).